The primary structure comprises 460 residues: Bifunctional protein GlmU (460 aa).

The interval 1-229 is pyrophosphorylase; it reads MTNYAIILAA…FNESLGVNDR (229 aa). UDP-N-acetyl-alpha-D-glucosamine is bound by residues 8 to 11, K22, Q72, and 77 to 78; these read LAAG and GT. D102 is a Mg(2+) binding site. Residues G139, E154, N169, and N227 each contribute to the UDP-N-acetyl-alpha-D-glucosamine site. Mg(2+) is bound at residue N227. The linker stretch occupies residues 230 to 250; it reads VALATAETVMRQRITQKHMVN. Residues 251–460 form an N-acetyltransferase region; that stretch reads GVTFHNPETV…RLAHHPSRSK (210 aa). Positions 332 and 350 each coordinate UDP-N-acetyl-alpha-D-glucosamine. The active-site Proton acceptor is H362. Residues Y365 and N376 each contribute to the UDP-N-acetyl-alpha-D-glucosamine site. Acetyl-CoA is bound by residues A379, 385 to 386, S404, A422, and R439; that span reads NY.

The protein in the N-terminal section; belongs to the N-acetylglucosamine-1-phosphate uridyltransferase family. In the C-terminal section; belongs to the transferase hexapeptide repeat family. Homotrimer. The cofactor is Mg(2+).

The protein localises to the cytoplasm. The catalysed reaction is alpha-D-glucosamine 1-phosphate + acetyl-CoA = N-acetyl-alpha-D-glucosamine 1-phosphate + CoA + H(+). The enzyme catalyses N-acetyl-alpha-D-glucosamine 1-phosphate + UTP + H(+) = UDP-N-acetyl-alpha-D-glucosamine + diphosphate. Its pathway is nucleotide-sugar biosynthesis; UDP-N-acetyl-alpha-D-glucosamine biosynthesis; N-acetyl-alpha-D-glucosamine 1-phosphate from alpha-D-glucosamine 6-phosphate (route II): step 2/2. It functions in the pathway nucleotide-sugar biosynthesis; UDP-N-acetyl-alpha-D-glucosamine biosynthesis; UDP-N-acetyl-alpha-D-glucosamine from N-acetyl-alpha-D-glucosamine 1-phosphate: step 1/1. It participates in bacterial outer membrane biogenesis; LPS lipid A biosynthesis. Catalyzes the last two sequential reactions in the de novo biosynthetic pathway for UDP-N-acetylglucosamine (UDP-GlcNAc). The C-terminal domain catalyzes the transfer of acetyl group from acetyl coenzyme A to glucosamine-1-phosphate (GlcN-1-P) to produce N-acetylglucosamine-1-phosphate (GlcNAc-1-P), which is converted into UDP-GlcNAc by the transfer of uridine 5-monophosphate (from uridine 5-triphosphate), a reaction catalyzed by the N-terminal domain. In Streptococcus pyogenes serotype M3 (strain ATCC BAA-595 / MGAS315), this protein is Bifunctional protein GlmU.